A 164-amino-acid polypeptide reads, in one-letter code: Probable ubiquitin-conjugating enzyme E2 7 (164 aa).

The UBC core domain maps to 3-163 (QSSLLLKKQL…VAQCVRRSQE (161 aa)). Catalysis depends on cysteine 88, which acts as the Glycyl thioester intermediate.

It belongs to the ubiquitin-conjugating enzyme family.

The catalysed reaction is S-ubiquitinyl-[E1 ubiquitin-activating enzyme]-L-cysteine + [E2 ubiquitin-conjugating enzyme]-L-cysteine = [E1 ubiquitin-activating enzyme]-L-cysteine + S-ubiquitinyl-[E2 ubiquitin-conjugating enzyme]-L-cysteine.. Its pathway is protein modification; protein ubiquitination. Its function is as follows. Catalyzes the covalent attachment of ubiquitin to other proteins. The chain is Probable ubiquitin-conjugating enzyme E2 7 (ubc-7) from Caenorhabditis elegans.